The following is a 113-amino-acid chain: T cell receptor alpha variable 8-3 (113 aa).

A signal peptide spans Met-1–Ala-20. One can recognise an Ig-like domain in the interval Gln-21–Gly-113. The cysteines at positions 42 and 110 are disulfide-linked. An N-linked (GlcNAc...) asparagine glycan is attached at Asn-43.

In terms of assembly, alpha-beta TR is a heterodimer composed of an alpha and beta chain; disulfide-linked. The alpha-beta TR is associated with the transmembrane signaling CD3 coreceptor proteins to form the TR-CD3 (TcR or TCR). The assembly of alpha-beta TR heterodimers with CD3 occurs in the endoplasmic reticulum where a single alpha-beta TR heterodimer associates with one CD3D-CD3E heterodimer, one CD3G-CD3E heterodimer and one CD247 homodimer forming a stable octameric structure. CD3D-CD3E and CD3G-CD3E heterodimers preferentially associate with TR alpha and TR beta chains, respectively. The association of the CD247 homodimer is the last step of TcR assembly in the endoplasmic reticulum and is required for transport to the cell surface.

It localises to the cell membrane. Its function is as follows. V region of the variable domain of T cell receptor (TR) alpha chain that participates in the antigen recognition. Alpha-beta T cell receptors are antigen specific receptors which are essential to the immune response and are present on the cell surface of T lymphocytes. Recognize peptide-major histocompatibility (MH) (pMH) complexes that are displayed by antigen presenting cells (APC), a prerequisite for efficient T cell adaptive immunity against pathogens. Binding of alpha-beta TR to pMH complex initiates TR-CD3 clustering on the cell surface and intracellular activation of LCK that phosphorylates the ITAM motifs of CD3G, CD3D, CD3E and CD247 enabling the recruitment of ZAP70. In turn ZAP70 phosphorylates LAT, which recruits numerous signaling molecules to form the LAT signalosome. The LAT signalosome propagates signal branching to three major signaling pathways, the calcium, the mitogen-activated protein kinase (MAPK) kinase and the nuclear factor NF-kappa-B (NF-kB) pathways, leading to the mobilization of transcription factors that are critical for gene expression and essential for T cell growth and differentiation. The T cell repertoire is generated in the thymus, by V-(D)-J rearrangement. This repertoire is then shaped by intrathymic selection events to generate a peripheral T cell pool of self-MH restricted, non-autoaggressive T cells. Post-thymic interaction of alpha-beta TR with the pMH complexes shapes TR structural and functional avidity. This Homo sapiens (Human) protein is T cell receptor alpha variable 8-3.